A 109-amino-acid polypeptide reads, in one-letter code: Oncomodulin (109 aa).

Ser2 is modified (N-acetylserine). 2 EF-hand domains span residues 39-74 (MSAS…FQSD) and 78-109 (LTES…MVHS). Asp52, Asp54, Ser56, Tyr58, Glu63, Asp91, Asp93, Asp95, Lys97, and Glu102 together coordinate Ca(2+). Residues 82-109 (ETKSLMDAADNDGDGKIGADEFQEMVHS) form a disordered region. Residues 94–109 (GDGKIGADEFQEMVHS) are compositionally biased toward basic and acidic residues.

Belongs to the parvalbumin family. Found in tumor tissues and not detected in normal tissues.

Has some calmodulin-like activity with respect to enzyme activation and growth regulation. Binds two calcium ions. The polypeptide is Oncomodulin (Ocm) (Mus musculus (Mouse)).